The chain runs to 541 residues: Chaperonin GroEL (541 aa).

ATP contacts are provided by residues 29–32 (TLGP), 86–90 (DGTTT), Gly413, 477–479 (DAL), and Asp493.

It belongs to the chaperonin (HSP60) family. Forms a cylinder of 14 subunits composed of two heptameric rings stacked back-to-back. Interacts with the co-chaperonin GroES.

The protein localises to the cytoplasm. The catalysed reaction is ATP + H2O + a folded polypeptide = ADP + phosphate + an unfolded polypeptide.. Together with its co-chaperonin GroES, plays an essential role in assisting protein folding. The GroEL-GroES system forms a nano-cage that allows encapsulation of the non-native substrate proteins and provides a physical environment optimized to promote and accelerate protein folding. In Clostridium botulinum (strain 657 / Type Ba4), this protein is Chaperonin GroEL.